Consider the following 1412-residue polypeptide: Probable phosphatidylinositol 4-kinase STT4 homolog (1412 aa).

One can recognise a PIK helical domain in the interval 878–1055 (SMETNGFYRF…GTFVRCIEEI (178 aa)). The segment at 1056–1163 (MKEMPDGSRD…ISIKQLIFKS (108 aa)) is pleckstrin homology (PH) domain conferring phosphoinositide binding specificity. The PI3K/PI4K catalytic domain maps to 1127–1396 (NGSARALQSH…LIAESSQKFR (270 aa)). The segment at 1133-1139 (LQSHSKV) is G-loop. The segment at 1266 to 1274 (NIKDRHNGN) is catalytic loop. Residues 1285-1308 (HIDFGYMLEMSPGNLNIEAPLKLT) form an activation loop region.

The protein belongs to the PI3/PI4-kinase family. Type III PI4K subfamily.

Its subcellular location is the cytoplasm. The catalysed reaction is a 1,2-diacyl-sn-glycero-3-phospho-(1D-myo-inositol) + ATP = a 1,2-diacyl-sn-glycero-3-phospho-(1D-myo-inositol 4-phosphate) + ADP + H(+). Functionally, acts on phosphatidylinositol (PI) in the first committed step in the production of the second messenger inositol 1,4,5,-trisphosphate. This Encephalitozoon cuniculi (strain GB-M1) (Microsporidian parasite) protein is Probable phosphatidylinositol 4-kinase STT4 homolog (STT4).